Consider the following 130-residue polypeptide: ATP synthase epsilon chain (130 aa).

It belongs to the ATPase epsilon chain family. As to quaternary structure, F-type ATPases have 2 components, CF(1) - the catalytic core - and CF(0) - the membrane proton channel. CF(1) has five subunits: alpha(3), beta(3), gamma(1), delta(1), epsilon(1). CF(0) has three main subunits: a, b and c.

The protein localises to the cell membrane. Functionally, produces ATP from ADP in the presence of a proton gradient across the membrane. This is ATP synthase epsilon chain from Nocardia farcinica (strain IFM 10152).